Consider the following 457-residue polypeptide: Multidrug resistance protein MdtK (457 aa).

The next 12 membrane-spanning stretches (helical) occupy residues leucine 11–valine 31, alanine 46–leucine 66, tryptophan 93–isoleucine 113, alanine 127–leucine 147, glycine 160–tyrosine 180, leucine 188–methionine 208, leucine 243–valine 263, leucine 283–phenylalanine 301, tyrosine 316–phenylalanine 336, leucine 357–valine 377, isoleucine 387–glycine 407, and proline 418–leucine 438.

Belongs to the multi antimicrobial extrusion (MATE) (TC 2.A.66.1) family. MdtK subfamily.

It localises to the cell inner membrane. Its function is as follows. Multidrug efflux pump that functions probably as a Na(+)/drug antiporter. The polypeptide is Multidrug resistance protein MdtK (Yersinia pseudotuberculosis serotype O:1b (strain IP 31758)).